Consider the following 278-residue polypeptide: Inosose isomerase (278 aa).

A divalent metal cation contacts are provided by E142, D174, H200, and E246.

The protein belongs to the IolI family. It depends on Mn(2+) as a cofactor. Requires Fe(2+) as cofactor. The cofactor is Co(2+).

The catalysed reaction is scyllo-inosose = scyllo-inosine. Its pathway is polyol metabolism; myo-inositol degradation into acetyl-CoA. Its function is as follows. Involved in the reversible interconverion of 2-keto-myo-inositol (2KMI, inosose or 2,4,6/3,5-pentahydroxycyclohexanone) to 1-keto-D-chiro-inositol (1KDCI or 2,3,5/4,6-pentahydroxycyclohexanone). The sequence is that of Inosose isomerase (iolI) from Bacillus subtilis (strain 168).